A 272-amino-acid chain; its full sequence is Tryptophan synthase alpha chain (272 aa).

Residues glutamate 49 and aspartate 60 each act as proton acceptor in the active site.

This sequence belongs to the TrpA family. As to quaternary structure, tetramer of two alpha and two beta chains.

It carries out the reaction (1S,2R)-1-C-(indol-3-yl)glycerol 3-phosphate + L-serine = D-glyceraldehyde 3-phosphate + L-tryptophan + H2O. Its pathway is amino-acid biosynthesis; L-tryptophan biosynthesis; L-tryptophan from chorismate: step 5/5. In terms of biological role, the alpha subunit is responsible for the aldol cleavage of indoleglycerol phosphate to indole and glyceraldehyde 3-phosphate. The polypeptide is Tryptophan synthase alpha chain (Methylibium petroleiphilum (strain ATCC BAA-1232 / LMG 22953 / PM1)).